The chain runs to 382 residues: Lipoyl synthase, mitochondrial (382 aa).

A mitochondrion-targeting transit peptide spans 1-30; that stretch reads MHGRRHLAASLARALTYAPSRSISSTPSLL. The span at 25–34 shows a compositional bias: polar residues; sequence STPSLLQTLD. The segment at 25 to 46 is disordered; that stretch reads STPSLLQTLDPSTPSPAAAPPT. Cysteine 112, cysteine 117, cysteine 123, cysteine 143, cysteine 147, cysteine 150, and serine 359 together coordinate [4Fe-4S] cluster. Residues 128-348 form the Radical SAM core domain; that stretch reads ETGTATATIM…RSLGVDMGFR (221 aa).

This sequence belongs to the radical SAM superfamily. Lipoyl synthase family. It depends on [4Fe-4S] cluster as a cofactor.

It localises to the mitochondrion. The catalysed reaction is [[Fe-S] cluster scaffold protein carrying a second [4Fe-4S](2+) cluster] + N(6)-octanoyl-L-lysyl-[protein] + 2 oxidized [2Fe-2S]-[ferredoxin] + 2 S-adenosyl-L-methionine + 4 H(+) = [[Fe-S] cluster scaffold protein] + N(6)-[(R)-dihydrolipoyl]-L-lysyl-[protein] + 4 Fe(3+) + 2 hydrogen sulfide + 2 5'-deoxyadenosine + 2 L-methionine + 2 reduced [2Fe-2S]-[ferredoxin]. The protein operates within protein modification; protein lipoylation via endogenous pathway; protein N(6)-(lipoyl)lysine from octanoyl-[acyl-carrier-protein]: step 2/2. Catalyzes the radical-mediated insertion of two sulfur atoms into the C-6 and C-8 positions of the octanoyl moiety bound to the lipoyl domains of lipoate-dependent enzymes, thereby converting the octanoylated domains into lipoylated derivatives. The sequence is that of Lipoyl synthase, mitochondrial from Oryza sativa subsp. japonica (Rice).